A 109-amino-acid chain; its full sequence is Large ribosomal subunit protein uL22 (109 aa).

Belongs to the universal ribosomal protein uL22 family. As to quaternary structure, part of the 50S ribosomal subunit.

This protein binds specifically to 23S rRNA; its binding is stimulated by other ribosomal proteins, e.g. L4, L17, and L20. It is important during the early stages of 50S assembly. It makes multiple contacts with different domains of the 23S rRNA in the assembled 50S subunit and ribosome. Functionally, the globular domain of the protein is located near the polypeptide exit tunnel on the outside of the subunit, while an extended beta-hairpin is found that lines the wall of the exit tunnel in the center of the 70S ribosome. This is Large ribosomal subunit protein uL22 from Dehalococcoides mccartyi (strain ATCC BAA-2100 / JCM 16839 / KCTC 5957 / BAV1).